An 818-amino-acid chain; its full sequence is Elongation factor G, mitochondrial (818 aa).

A mitochondrion-targeting transit peptide spans 1–23 (MFLGRAASRTCRHSQPLRVAARA). Residues 67-96 (MASTATATKPTEEASSSDQPPAPAHKLTDN) form a disordered region. Residues 69–85 (STATATKPTEEASSSDQ) are compositionally biased toward polar residues. The region spanning 102–390 (TFQRNIGISA…GVCEYLPNPS (289 aa)) is the tr-type G domain. Residues 111–118 (AHIDSGKT), 188–192 (DTPGH), and 242–245 (NKMD) each bind GTP.

This sequence belongs to the TRAFAC class translation factor GTPase superfamily. Classic translation factor GTPase family. EF-G/EF-2 subfamily.

The protein resides in the mitochondrion. It participates in protein biosynthesis; polypeptide chain elongation. Its function is as follows. Mitochondrial GTPase that catalyzes the GTP-dependent ribosomal translocation step during translation elongation. During this step, the ribosome changes from the pre-translocational (PRE) to the post-translocational (POST) state as the newly formed A-site-bound peptidyl-tRNA and P-site-bound deacylated tRNA move to the P and E sites, respectively. Catalyzes the coordinated movement of the two tRNA molecules, the mRNA and conformational changes in the ribosome. This chain is Elongation factor G, mitochondrial, found in Coprinopsis cinerea (strain Okayama-7 / 130 / ATCC MYA-4618 / FGSC 9003) (Inky cap fungus).